A 473-amino-acid polypeptide reads, in one-letter code: Photosystem II CP43 reaction center protein (473 aa).

A propeptide spanning residues 1–14 (MKTLYSLRRFYHVE) is cleaved from the precursor. Threonine 15 carries the post-translational modification N-acetylthreonine. Phosphothreonine is present on threonine 15. Transmembrane regions (helical) follow at residues 69–93 (LFEV…PHLA), 134–155 (LLGP…KDRN), 178–200 (KALY…RKIT), 255–275 (KPFA…LSYS), and 291–312 (WFNN…ASQA). Residue glutamate 367 coordinates [CaMn4O5] cluster. Residues 447–471 (RARAAAAGFEKGIDRDFEPVLSMTP) traverse the membrane as a helical segment.

This sequence belongs to the PsbB/PsbC family. PsbC subfamily. PSII is composed of 1 copy each of membrane proteins PsbA, PsbB, PsbC, PsbD, PsbE, PsbF, PsbH, PsbI, PsbJ, PsbK, PsbL, PsbM, PsbT, PsbX, PsbY, PsbZ, Psb30/Ycf12, at least 3 peripheral proteins of the oxygen-evolving complex and a large number of cofactors. It forms dimeric complexes. Binds multiple chlorophylls and provides some of the ligands for the Ca-4Mn-5O cluster of the oxygen-evolving complex. It may also provide a ligand for a Cl- that is required for oxygen evolution. PSII binds additional chlorophylls, carotenoids and specific lipids. serves as cofactor.

Its subcellular location is the plastid. It is found in the chloroplast thylakoid membrane. Its function is as follows. One of the components of the core complex of photosystem II (PSII). It binds chlorophyll and helps catalyze the primary light-induced photochemical processes of PSII. PSII is a light-driven water:plastoquinone oxidoreductase, using light energy to abstract electrons from H(2)O, generating O(2) and a proton gradient subsequently used for ATP formation. The sequence is that of Photosystem II CP43 reaction center protein from Crucihimalaya wallichii (Rock-cress).